Consider the following 210-residue polypeptide: Probable GTP-binding protein EngB (210 aa).

One can recognise an EngB-type G domain in the interval 25–199 (TGIEVAFAGR…RQKLDTWFSE (175 aa)). Residues 33–40 (GRSNAGKS), 60–64 (GRTQL), 78–81 (DLPG), 145–148 (TKAD), and 178–180 (FSS) contribute to the GTP site. Mg(2+) is bound by residues Ser40 and Thr62.

The protein belongs to the TRAFAC class TrmE-Era-EngA-EngB-Septin-like GTPase superfamily. EngB GTPase family. Mg(2+) serves as cofactor.

Functionally, necessary for normal cell division and for the maintenance of normal septation. The protein is Probable GTP-binding protein EngB of Escherichia coli O6:H1 (strain CFT073 / ATCC 700928 / UPEC).